The following is an 835-amino-acid chain: Leucine--tRNA ligase (835 aa).

The 'HIGH' region motif lies at 36–46 (PYPSGKIHVGH). Residues 602 to 606 (KMSKS) carry the 'KMSKS' region motif. Lys605 provides a ligand contact to ATP.

It belongs to the class-I aminoacyl-tRNA synthetase family.

It localises to the cytoplasm. It catalyses the reaction tRNA(Leu) + L-leucine + ATP = L-leucyl-tRNA(Leu) + AMP + diphosphate. This Rickettsia conorii (strain ATCC VR-613 / Malish 7) protein is Leucine--tRNA ligase.